The chain runs to 120 residues: MFLLYEYDIFWAFLIISSLIPILAFLISGVLAPISEGPEKLSSYESGIEPMGDAWLQFRIRYYMFALVFVVFDVETVFLYPWAMSFDVLGVSVFIEALIFVLIPIIGSVYAWRKGALEWS.

A run of 3 helical transmembrane segments spans residues 9-29, 64-84, and 88-108; these read IFWA…LISG, MFAL…PWAM, and VLGV…IIGS.

This sequence belongs to the complex I subunit 3 family. NDH is composed of at least 16 different subunits, 5 of which are encoded in the nucleus.

It localises to the plastid. The protein resides in the chloroplast thylakoid membrane. The catalysed reaction is a plastoquinone + NADH + (n+1) H(+)(in) = a plastoquinol + NAD(+) + n H(+)(out). It carries out the reaction a plastoquinone + NADPH + (n+1) H(+)(in) = a plastoquinol + NADP(+) + n H(+)(out). NDH shuttles electrons from NAD(P)H:plastoquinone, via FMN and iron-sulfur (Fe-S) centers, to quinones in the photosynthetic chain and possibly in a chloroplast respiratory chain. The immediate electron acceptor for the enzyme in this species is believed to be plastoquinone. Couples the redox reaction to proton translocation, and thus conserves the redox energy in a proton gradient. This is NAD(P)H-quinone oxidoreductase subunit 3, chloroplastic from Drimys granadensis.